Consider the following 271-residue polypeptide: Formamidopyrimidine-DNA glycosylase (271 aa).

Catalysis depends on Pro-2, which acts as the Schiff-base intermediate with DNA. The Proton donor role is filled by Glu-3. Lys-57 serves as the catalytic Proton donor; for beta-elimination activity. DNA contacts are provided by His-90, Arg-109, and Lys-150. Residues Leu-235 to Lys-269 form an FPG-type zinc finger. Catalysis depends on Arg-259, which acts as the Proton donor; for delta-elimination activity.

The protein belongs to the FPG family. As to quaternary structure, monomer. The cofactor is Zn(2+).

It catalyses the reaction Hydrolysis of DNA containing ring-opened 7-methylguanine residues, releasing 2,6-diamino-4-hydroxy-5-(N-methyl)formamidopyrimidine.. The catalysed reaction is 2'-deoxyribonucleotide-(2'-deoxyribose 5'-phosphate)-2'-deoxyribonucleotide-DNA = a 3'-end 2'-deoxyribonucleotide-(2,3-dehydro-2,3-deoxyribose 5'-phosphate)-DNA + a 5'-end 5'-phospho-2'-deoxyribonucleoside-DNA + H(+). Functionally, involved in base excision repair of DNA damaged by oxidation or by mutagenic agents. Acts as a DNA glycosylase that recognizes and removes damaged bases. Has a preference for oxidized purines, such as 7,8-dihydro-8-oxoguanine (8-oxoG). Has AP (apurinic/apyrimidinic) lyase activity and introduces nicks in the DNA strand. Cleaves the DNA backbone by beta-delta elimination to generate a single-strand break at the site of the removed base with both 3'- and 5'-phosphates. The polypeptide is Formamidopyrimidine-DNA glycosylase (Haemophilus influenzae (strain PittEE)).